The primary structure comprises 339 residues: Probable geranylgeranyl transferase type-2 subunit beta (339 aa).

6 PFTB repeats span residues Ile-24–Lys-65, Lys-72–Asp-113, Ile-120–Lys-161, Cys-168–Asn-209, Ile-216–Asp-257, and Asn-264–Gly-306. Geranylgeranyl diphosphate is bound by residues His-194–Gly-196 and Arg-236–Trp-248. Zn(2+) contacts are provided by Asp-242, Cys-244, and His-294.

It belongs to the protein prenyltransferase subunit beta family. As to quaternary structure, heterodimer of an alpha and a beta subunit. Zn(2+) is required as a cofactor.

It catalyses the reaction geranylgeranyl diphosphate + L-cysteinyl-[protein] = S-geranylgeranyl-L-cysteinyl-[protein] + diphosphate. Functionally, catalyzes the transfer of a geranyl-geranyl moiety from geranyl-geranyl pyrophosphate to both cysteines in Rab proteins with an -XXCC, -XCXC and -CCXX C-terminal. The chain is Probable geranylgeranyl transferase type-2 subunit beta (rabggtb) from Dictyostelium discoideum (Social amoeba).